A 662-amino-acid polypeptide reads, in one-letter code: UvrABC system protein B (662 aa).

The region spanning glutamate 25–arginine 412 is the Helicase ATP-binding domain. Glycine 38–threonine 45 is a binding site for ATP. The Beta-hairpin motif lies at tyrosine 91–isoleucine 114. In terms of domain architecture, Helicase C-terminal spans glutamine 429–isoleucine 595. The 36-residue stretch at lysine 620–glutamine 655 folds into the UVR domain.

It belongs to the UvrB family. In terms of assembly, forms a heterotetramer with UvrA during the search for lesions. Interacts with UvrC in an incision complex.

Its subcellular location is the cytoplasm. In terms of biological role, the UvrABC repair system catalyzes the recognition and processing of DNA lesions. A damage recognition complex composed of 2 UvrA and 2 UvrB subunits scans DNA for abnormalities. Upon binding of the UvrA(2)B(2) complex to a putative damaged site, the DNA wraps around one UvrB monomer. DNA wrap is dependent on ATP binding by UvrB and probably causes local melting of the DNA helix, facilitating insertion of UvrB beta-hairpin between the DNA strands. Then UvrB probes one DNA strand for the presence of a lesion. If a lesion is found the UvrA subunits dissociate and the UvrB-DNA preincision complex is formed. This complex is subsequently bound by UvrC and the second UvrB is released. If no lesion is found, the DNA wraps around the other UvrB subunit that will check the other stand for damage. The protein is UvrABC system protein B of Caldanaerobacter subterraneus subsp. tengcongensis (strain DSM 15242 / JCM 11007 / NBRC 100824 / MB4) (Thermoanaerobacter tengcongensis).